A 38-amino-acid chain; its full sequence is Photosystem II reaction center protein L (38 aa).

The chain crosses the membrane as a helical span at residues serine 17 to phenylalanine 37.

The protein belongs to the PsbL family. PSII is composed of 1 copy each of membrane proteins PsbA, PsbB, PsbC, PsbD, PsbE, PsbF, PsbH, PsbI, PsbJ, PsbK, PsbL, PsbM, PsbT, PsbX, PsbY, PsbZ, Psb30/Ycf12, at least 3 peripheral proteins of the oxygen-evolving complex and a large number of cofactors. It forms dimeric complexes.

Its subcellular location is the plastid. The protein localises to the chloroplast thylakoid membrane. One of the components of the core complex of photosystem II (PSII). PSII is a light-driven water:plastoquinone oxidoreductase that uses light energy to abstract electrons from H(2)O, generating O(2) and a proton gradient subsequently used for ATP formation. It consists of a core antenna complex that captures photons, and an electron transfer chain that converts photonic excitation into a charge separation. This subunit is found at the monomer-monomer interface and is required for correct PSII assembly and/or dimerization. The chain is Photosystem II reaction center protein L from Aethionema cordifolium (Lebanon stonecress).